The primary structure comprises 196 residues: Probable GTP-binding protein EngB (196 aa).

Positions Asp-21 to Ser-195 constitute an EngB-type G domain. GTP-binding positions include Gly-29–Ser-36, Gly-56–Leu-60, Asp-75–Gly-78, Thr-142–Asp-145, and Ile-174–Asn-176. Mg(2+) is bound by residues Ser-36 and Thr-58.

It belongs to the TRAFAC class TrmE-Era-EngA-EngB-Septin-like GTPase superfamily. EngB GTPase family. The cofactor is Mg(2+).

In terms of biological role, necessary for normal cell division and for the maintenance of normal septation. This chain is Probable GTP-binding protein EngB, found in Mycoplasma capricolum subsp. capricolum (strain California kid / ATCC 27343 / NCTC 10154).